Here is a 276-residue protein sequence, read N- to C-terminus: Undecaprenyl-diphosphatase (276 aa).

Helical transmembrane passes span 2–22 (LEIL…FLPI), 43–63 (FIDM…VVLY), 83–103 (WTLW…GLPL), 111–131 (LMNW…FIVI), 147–167 (TLPY…LIPG), 186–206 (YVAA…ASLL), 224–244 (LILA…IRFL), and 255–275 (AFGW…ALLA).

Belongs to the UppP family.

The protein resides in the cell membrane. It catalyses the reaction di-trans,octa-cis-undecaprenyl diphosphate + H2O = di-trans,octa-cis-undecaprenyl phosphate + phosphate + H(+). Its function is as follows. Catalyzes the dephosphorylation of undecaprenyl diphosphate (UPP). Confers resistance to bacitracin. This is Undecaprenyl-diphosphatase from Limosilactobacillus fermentum (strain NBRC 3956 / LMG 18251) (Lactobacillus fermentum).